The primary structure comprises 306 residues: Probable dimethyladenosine transferase (306 aa).

S-adenosyl-L-methionine-binding residues include His30, Leu32, Gly57, Glu78, Asp106, and Asn121.

Belongs to the class I-like SAM-binding methyltransferase superfamily. rRNA adenine N(6)-methyltransferase family. Part of the small subunit (SSU) processome, composed of more than 70 proteins and the RNA chaperone small nucleolar RNA (snoRNA) U3.

The protein localises to the nucleus. It localises to the nucleolus. It carries out the reaction adenosine(1779)/adenosine(1780) in 18S rRNA + 4 S-adenosyl-L-methionine = N(6)-dimethyladenosine(1779)/N(6)-dimethyladenosine(1780) in 18S rRNA + 4 S-adenosyl-L-homocysteine + 4 H(+). Specifically dimethylates two adjacent adenosines in the loop of a conserved hairpin near the 3'-end of 18S rRNA in the 40S particle. Involved in the pre-rRNA processing steps leading to small-subunit rRNA production independently of its RNA-modifying catalytic activity. Part of the small subunit (SSU) processome, first precursor of the small eukaryotic ribosomal subunit. During the assembly of the SSU processome in the nucleolus, many ribosome biogenesis factors, an RNA chaperone and ribosomal proteins associate with the nascent pre-rRNA and work in concert to generate RNA folding, modifications, rearrangements and cleavage as well as targeted degradation of pre-ribosomal RNA by the RNA exosome. The chain is Probable dimethyladenosine transferase from Drosophila melanogaster (Fruit fly).